The following is a 207-amino-acid chain: Inner membrane-spanning protein YciB (207 aa).

The next 6 membrane-spanning stretches (helical) occupy residues 3 to 23 (FLFDLLPIVLFFVAFKVAEGQ), 51 to 71 (VLLATLVVIVATFAQIGWLLL), 78 to 98 (TMLWVSLGLVTVLGGATVWFH), 105 to 125 (WKPSVLYWVMGTAFWLSHAVF), 150 to 170 (FMWIAFFAFMGLANLYVAYSF), and 178 to 198 (FKLFGGVGLMLLFTLAQGLYL).

This sequence belongs to the YciB family.

It is found in the cell inner membrane. Plays a role in cell envelope biogenesis, maintenance of cell envelope integrity and membrane homeostasis. This Methylibium petroleiphilum (strain ATCC BAA-1232 / LMG 22953 / PM1) protein is Inner membrane-spanning protein YciB.